The sequence spans 298 residues: U1 small nuclear ribonucleoprotein A (298 aa).

RRM domains are found at residues 2 to 113 (SALY…KART) and 227 to 298 (KVLL…GFAK).

It belongs to the RRM U1 A/B'' family. In terms of assembly, component of the spliceosome where it is associated with snRNP U1.

The protein localises to the nucleus. Its function is as follows. Involved in nuclear mRNA splicing. The principal role of the U1A is to help fold or maintain U1 RNA in an active configuration. It is the first snRNP to interact with pre-mRNA. This interaction is required for the subsequent binding of U2 snRNP and the U4/U6/U5 tri-snRNP. This chain is U1 small nuclear ribonucleoprotein A (MUD1), found in Saccharomyces cerevisiae (strain ATCC 204508 / S288c) (Baker's yeast).